A 325-amino-acid chain; its full sequence is NADH-cytochrome b5 reductase 2 (325 aa).

The chain crosses the membrane as a helical span at residues 32-48 (VPLYGGLALAAGGAYYY). The FAD-binding FR-type domain maps to 74 to 179 (QGWVDLKLAG…KGPIPKYPWE (106 aa)). 182–217 (KHDHICMIAGGTGITPMYQIIRKIFNNPNDKTKVTL) provides a ligand contact to FAD.

Belongs to the flavoprotein pyridine nucleotide cytochrome reductase family. It depends on FAD as a cofactor.

It localises to the mitochondrion outer membrane. The catalysed reaction is 2 Fe(III)-[cytochrome b5] + NADH = 2 Fe(II)-[cytochrome b5] + NAD(+) + H(+). Its function is as follows. May mediate the reduction of outer membrane cytochrome b5. The sequence is that of NADH-cytochrome b5 reductase 2 (MCR1) from Coccidioides immitis (strain RS) (Valley fever fungus).